The primary structure comprises 199 residues: Peroxiredoxin-1 (199 aa).

The 160-residue stretch at 6–165 folds into the Thioredoxin domain; it reads AYIGKLAPDF…TLRLVQAFQF (160 aa). C52 functions as the Cysteine sulfenic acid (-SOH) intermediate in the catalytic mechanism.

It belongs to the peroxiredoxin family. AhpC/Prx1 subfamily. As to quaternary structure, homodimer; disulfide-linked, upon oxidation. 5 homodimers assemble to form a ring-like decamer. Interacts with GDPD5; forms a mixed-disulfide with GDPD5. Interacts with SESN1 and SESN2. Interacts with FAM107A. In terms of processing, the enzyme can be inactivated by further oxidation of the cysteine sulfenic acid (C(P)-SOH) to sulphinic acid (C(P)-SO2H) instead of its condensation to a disulfide bond. It can be reactivated by forming a transient disulfide bond with sulfiredoxin SRXN1, which reduces the cysteine sulfinic acid in an ATP- and Mg-dependent manner.

It is found in the cytoplasm. The enzyme catalyses a hydroperoxide + [thioredoxin]-dithiol = an alcohol + [thioredoxin]-disulfide + H2O. Thiol-specific peroxidase that catalyzes the reduction of hydrogen peroxide and organic hydroperoxides to water and alcohols, respectively. Plays a role in cell protection against oxidative stress by detoxifying peroxides and as sensor of hydrogen peroxide-mediated signaling events. Might participate in the signaling cascades of growth factors and tumor necrosis factor-alpha by regulating the intracellular concentrations of H(2)O(2). Reduces an intramolecular disulfide bond in GDPD5 that gates the ability to GDPD5 to drive postmitotic motor neuron differentiation. This Gekko japonicus (Schlegel's Japanese gecko) protein is Peroxiredoxin-1 (PRDX1).